The primary structure comprises 407 residues: Peptidase T (407 aa).

Histidine 81 is a Zn(2+) binding site. Aspartate 83 is a catalytic residue. Residue aspartate 142 coordinates Zn(2+). The active-site Proton acceptor is the glutamate 176. Glutamate 177, aspartate 199, and histidine 381 together coordinate Zn(2+).

It belongs to the peptidase M20B family. Requires Zn(2+) as cofactor.

It is found in the cytoplasm. The enzyme catalyses Release of the N-terminal residue from a tripeptide.. In terms of biological role, cleaves the N-terminal amino acid of tripeptides. The sequence is that of Peptidase T from Streptococcus sanguinis (strain SK36).